We begin with the raw amino-acid sequence, 809 residues long: Protein TRC8 homolog (809 aa).

The next 11 helical transmembrane spans lie at 124–144 (TVKF…FMLW), 147–167 (HLVM…SYWS), 200–220 (VMSL…FAYI), 233–253 (MPII…AKVV), 256–276 (LPVV…MQSA), 350–370 (LVDG…ISMF), 392–412 (LGTV…LTSL), 425–445 (LCLL…PILM), 461–481 (ALSV…HLWS), 488–508 (WLLA…VSLA), and 539–559 (SVEF…LIFE). The segment at 621 to 659 (CAICYQEMYSAKITRCRHFFHGVCLRKWLYVQDRCPLCH) adopts an RING-type; atypical zinc-finger fold. 2 disordered regions span residues 696 to 724 (NNAA…SSSA) and 752 to 788 (VASS…TSAA). The segment covering 711-724 (EASEQAPATSSSSA) has biased composition (low complexity).

As to quaternary structure, interacts with VHL. Interacts with the MPN domain of CSN5. Interacts with EIF3F and EIF3H.

The protein resides in the endoplasmic reticulum membrane. In terms of biological role, plays a role in growth inhibition that is dependent upon COP9 signalosome subunits CSN5 and CSN6. May modulate signalosome levels or compartmentalization. Probably functions in the same or a related pathway to VHL during early midline development. The sequence is that of Protein TRC8 homolog from Drosophila melanogaster (Fruit fly).